Reading from the N-terminus, the 272-residue chain is Eukaryotic translation initiation factor 3 subunit G (272 aa).

Disordered regions lie at residues methionine 1–isoleucine 28 and alanine 143–aspartate 187. The 79-residue stretch at threonine 190–proline 268 folds into the RRM domain.

It belongs to the eIF-3 subunit G family. In terms of assembly, component of the eukaryotic translation initiation factor 3 (eIF-3) complex.

The protein localises to the cytoplasm. Its function is as follows. RNA-binding component of the eukaryotic translation initiation factor 3 (eIF-3) complex, which is involved in protein synthesis of a specialized repertoire of mRNAs and, together with other initiation factors, stimulates binding of mRNA and methionyl-tRNAi to the 40S ribosome. The eIF-3 complex specifically targets and initiates translation of a subset of mRNAs involved in cell proliferation. This subunit can bind 18S rRNA. The polypeptide is Eukaryotic translation initiation factor 3 subunit G (Culex quinquefasciatus (Southern house mosquito)).